A 1708-amino-acid polypeptide reads, in one-letter code: Rapamycin-insensitive companion of mTOR (1708 aa).

The segment at 1 to 789 (MAAIGRGRSL…DKANLHALIQ (789 aa)) is interaction with NBN. Phosphoserine occurs at positions 21, 35, and 265. Residue K274 forms a Glycyl lysine isopeptide (Lys-Gly) (interchain with G-Cter in ubiquitin) linkage. The segment at 521–570 (LKDTEEALLINLRDSQVLQHKENLEWNWNLIGTILKWPNVNLRNYKDEQL) is ribosome-binding domain. ATP is bound by residues N543, R572, and R576. The interval 1022–1041 (LSLNSESTSSRHNSESESVP) is disordered. N6-acetyllysine is present on residues K1092 and K1095. T1103 carries the post-translational modification Phosphothreonine. The interval 1103 to 1134 (TLPNKKHRSSSDPKGGKLSSESKTSNRRIRTL) is disordered. Residues K1116, K1119, and K1125 each carry the N6-acetyllysine modification. The residue at position 1135 (T1135) is a Phosphothreonine; by RPS6KB1. Phosphoserine is present on residues S1138, S1162, and S1219. Residues 1204–1252 (VVESSTSSHMKIRSQSFNTDTTTSGISSMSSSPSRETVGVDATTMDTDC) form a disordered region. A compositionally biased stretch (polar residues) spans 1206 to 1221 (ESSTSSHMKIRSQSFN). The span at 1222–1240 (TDTTTSGISSMSSSPSRET) shows a compositional bias: low complexity. S1235 is modified (phosphoserine; by GSK3-beta). Position 1271 is a phosphothreonine (T1271). Phosphoserine is present on residues S1274, S1278, S1282, and S1284. A compositionally biased stretch (low complexity) spans 1275–1288 (NHLSLSKSNSVSLV). The tract at residues 1275 to 1298 (NHLSLSKSNSVSLVPPGSSHTLPR) is disordered. T1295 carries the phosphothreonine modification. Residues S1302 and S1313 each carry the phosphoserine modification. T1332 bears the Phosphothreonine mark. Phosphoserine occurs at positions 1346 and 1353. Residue T1376 is modified to Phosphothreonine. Residue S1385 is modified to Phosphoserine. Position 1386 is a phosphotyrosine (Y1386). A phosphoserine mark is found at S1388, S1396, and S1411. Zn(2+) contacts are provided by H1515, C1520, and C1523. Phosphoserine is present on residues S1571, S1574, S1577, and S1591. Residue C1651 coordinates Zn(2+). T1695 carries the post-translational modification Phosphothreonine; by GSK3-alpha and GSK3-beta.

It belongs to the RICTOR family. As to quaternary structure, component of the mechanistic target of rapamycin complex 2 (mTORC2), consisting in two heterotretramers composed of MTOR, MLST8, RICTOR and MAPKAP1/SIN1. The mTORC2 core complex associates with PRR5/PROTOR1 and/or PRR5L/PROTOR2. Contrary to mTORC1, mTORC2 does not bind to and is not sensitive to FKBP12-rapamycin. Binds directly to MTOR and PRR5 within the TORC2 complex; interaction with MTOR is enhanced by deubiquitination of RICTOR by USP9X. Interaction with MAPKAP1 is not enhanced by RICTOR deubiquitination by USP9X. Interacts with CCDC28B. Interacts with NBN. Interacts with SIK3. Interacts with NCKAP1L. Interacts with kinases GSK3A and GSK3B; the interactions lead to phosphorylation of RICTOR at Thr-1695 which facilitates its FBXW7-mediated ubiquitination and subsequent degradation. Interacts with FBXW7; the interaction is enhanced by GSK3-mediated phosphorylation of Thr-1695 and results in RICTOR ubiquitination and degradation. Interacts with ARMH4 (via cytoplasmic tail); this interaction bridges ARMH4 to the mTORC2 complex and inhibits the mTORC2 kinase activity. Interacts with UBXN2A. Interacts with TSPAN8. In terms of assembly, (Microbial infection) Interacts with vaccinia virus protein F17; this interaction dysregulates MTOR. In terms of processing, phosphorylated by MTOR; when part of mTORC2. Phosphorylated at Thr-1135 by RPS6KB1 downstream of the mTORC1 complex: phosphorylation of RICTOR inhibits mTORC2 signaling by creating a binding site for 14-3-3 proteins. Phosphorylated at Thr-1695 by GSK3A and GSK3B which facilitates RICTOR ubiquitination and subsequent degradation. Phosphorylated at Ser-1235 by GSK3B in response to endoplasmic stress, inhibiting mTORC2 signaling. Post-translationally, ubiquitinated by the SCF(FBXW7) complex, leading to its degradation by the proteasome. Deubiquitinated by USP9X; deubiquitination stabilizes RICTOR and enhances its binding to MTOR, thus promoting mTORC2 complex assembly. Acetylated by EP300/p300 in response to glucose, leading to activate the mTORC2 complex. Acetylation by BLOC1S1/GCN5L1 in response to hypotoxic stress protects RICTOR against ubiquitination and subsequent degradation by the proteasome.

Its subcellular location is the cell membrane. It is found in the endoplasmic reticulum membrane. The protein resides in the lysosome membrane. In terms of biological role, component of the mechanistic target of rapamycin complex 2 (mTORC2), which transduces signals from growth factors to pathways involved in proliferation, cytoskeletal organization, lipogenesis and anabolic output. In response to growth factors, mTORC2 phosphorylates and activates AGC protein kinase family members, including AKT (AKT1, AKT2 and AKT3), PKC (PRKCA, PRKCB and PRKCE) and SGK1. In contrast to mTORC1, mTORC2 is nutrient-insensitive. Within the mTORC2 complex, RICTOR probably acts as a molecular adapter. RICTOR is responsible for the FKBP12-rapamycin-insensitivity of mTORC2. mTORC2 plays a critical role in AKT1 activation by mediating phosphorylation of different sites depending on the context, such as 'Thr-450', 'Ser-473', 'Ser-477' or 'Thr-479', facilitating the phosphorylation of the activation loop of AKT1 on 'Thr-308' by PDPK1/PDK1 which is a prerequisite for full activation. mTORC2 catalyzes the phosphorylation of SGK1 at 'Ser-422' and of PRKCA on 'Ser-657'. The mTORC2 complex also phosphorylates various proteins involved in insulin signaling, such as FBXW8 and IGF2BP1. mTORC2 acts upstream of Rho GTPases to regulate the actin cytoskeleton, probably by activating one or more Rho-type guanine nucleotide exchange factors. mTORC2 promotes the serum-induced formation of stress-fibers or F-actin. The polypeptide is Rapamycin-insensitive companion of mTOR (Homo sapiens (Human)).